The sequence spans 681 residues: Threonine--tRNA ligase (681 aa).

One can recognise a TGS domain in the interval 3–97 (KQIQVTLPDG…EEDVQLALLT (95 aa)). The segment at 279–576 (DHRVLGKQLD…LIEHYAGAFP (298 aa)) is catalytic. The Zn(2+) site is built by Cys372, His423, and His553.

This sequence belongs to the class-II aminoacyl-tRNA synthetase family. Homodimer. It depends on Zn(2+) as a cofactor.

The protein localises to the cytoplasm. It carries out the reaction tRNA(Thr) + L-threonine + ATP = L-threonyl-tRNA(Thr) + AMP + diphosphate + H(+). In terms of biological role, catalyzes the attachment of threonine to tRNA(Thr) in a two-step reaction: L-threonine is first activated by ATP to form Thr-AMP and then transferred to the acceptor end of tRNA(Thr). Also edits incorrectly charged L-seryl-tRNA(Thr). This chain is Threonine--tRNA ligase, found in Acidobacterium capsulatum (strain ATCC 51196 / DSM 11244 / BCRC 80197 / JCM 7670 / NBRC 15755 / NCIMB 13165 / 161).